Reading from the N-terminus, the 120-residue chain is UPF0231 protein KPK_4613 (120 aa).

It belongs to the UPF0231 family.

This chain is UPF0231 protein KPK_4613, found in Klebsiella pneumoniae (strain 342).